Consider the following 234-residue polypeptide: HTH-type transcriptional regulator MT1864 (234 aa).

One can recognise an HTH tetR-type domain in the interval 15-75; it reads EQIEAKIVEL…LLLVDAYSDL (61 aa). Residues 38–57 constitute a DNA-binding region (H-T-H motif); that stretch reads SLRAIARNLGMVSSAVYRYV.

Homodimer.

The protein resides in the cytoplasm. In terms of biological role, may participate in the regulatory network that controls the expression of MmpL lipid transporters. This is HTH-type transcriptional regulator MT1864 from Mycobacterium tuberculosis (strain CDC 1551 / Oshkosh).